The sequence spans 456 residues: UDP-N-acetylmuramoylalanine--D-glutamate ligase (456 aa).

ATP is bound at residue 121–127 (GTNGKTT).

Belongs to the MurCDEF family.

It is found in the cytoplasm. The catalysed reaction is UDP-N-acetyl-alpha-D-muramoyl-L-alanine + D-glutamate + ATP = UDP-N-acetyl-alpha-D-muramoyl-L-alanyl-D-glutamate + ADP + phosphate + H(+). It participates in cell wall biogenesis; peptidoglycan biosynthesis. In terms of biological role, cell wall formation. Catalyzes the addition of glutamate to the nucleotide precursor UDP-N-acetylmuramoyl-L-alanine (UMA). The polypeptide is UDP-N-acetylmuramoylalanine--D-glutamate ligase (Desulfotalea psychrophila (strain LSv54 / DSM 12343)).